The chain runs to 323 residues: Methionyl-tRNA formyltransferase (323 aa).

115–118 provides a ligand contact to (6S)-5,6,7,8-tetrahydrofolate; it reads SLLP.

This sequence belongs to the Fmt family.

It catalyses the reaction L-methionyl-tRNA(fMet) + (6R)-10-formyltetrahydrofolate = N-formyl-L-methionyl-tRNA(fMet) + (6S)-5,6,7,8-tetrahydrofolate + H(+). Attaches a formyl group to the free amino group of methionyl-tRNA(fMet). The formyl group appears to play a dual role in the initiator identity of N-formylmethionyl-tRNA by promoting its recognition by IF2 and preventing the misappropriation of this tRNA by the elongation apparatus. In Lactococcus lactis subsp. cremoris (strain SK11), this protein is Methionyl-tRNA formyltransferase.